Here is a 282-residue protein sequence, read N- to C-terminus: 2-dehydro-3-deoxyphosphooctonate aldolase (282 aa).

This sequence belongs to the KdsA family.

The protein resides in the cytoplasm. The enzyme catalyses D-arabinose 5-phosphate + phosphoenolpyruvate + H2O = 3-deoxy-alpha-D-manno-2-octulosonate-8-phosphate + phosphate. Its pathway is carbohydrate biosynthesis; 3-deoxy-D-manno-octulosonate biosynthesis; 3-deoxy-D-manno-octulosonate from D-ribulose 5-phosphate: step 2/3. It functions in the pathway bacterial outer membrane biogenesis; lipopolysaccharide biosynthesis. This chain is 2-dehydro-3-deoxyphosphooctonate aldolase, found in Shewanella piezotolerans (strain WP3 / JCM 13877).